We begin with the raw amino-acid sequence, 194 residues long: Imidazoleglycerol-phosphate dehydratase (194 aa).

Belongs to the imidazoleglycerol-phosphate dehydratase family.

It localises to the cytoplasm. The catalysed reaction is D-erythro-1-(imidazol-4-yl)glycerol 3-phosphate = 3-(imidazol-4-yl)-2-oxopropyl phosphate + H2O. The protein operates within amino-acid biosynthesis; L-histidine biosynthesis; L-histidine from 5-phospho-alpha-D-ribose 1-diphosphate: step 6/9. The chain is Imidazoleglycerol-phosphate dehydratase from Bacillus subtilis (strain 168).